The primary structure comprises 434 residues: Arrestin domain-containing protein 1 (434 aa).

Residues 292–349 are disordered; sequence SPCPGRESSPGTLSLVVPSAPPQEEAEAVASGPHFSDPVSLSTKSHSQQQPLSAPLGS. The segment covering 330–343 has biased composition (polar residues); sequence VSLSTKSHSQQQPL. 2 consecutive short sequence motifs (PPxY motif) follow at residues 401–404 and 414–417; these read PPEY and PPSY.

This sequence belongs to the arrestin family. Interacts (via PPxY motifs) with ITCH (via WW domains); the interaction is direct and participates in the recruitment of the ubiquitin-protein ligase ITCH to the NOTCH1 receptor. Interacts with ARRB1 and ARRB2; the interaction is direct. Interacts with TSG101; may recruit TSG101 to the plasma membrane. Interacts (via PPxY motifs) with WWP2 (via WW domains); ubiquitinates ARRDC1. Interacts with SLC11A2; controls the incorporation of SLC11A2 into extracellular vesicles through an ubiquitination-dependent mechanism. Interacts with WWP1 (via WW domains). Interacts with NEDD4 (via WW domains). Interacts with PDCD6IP. In terms of processing, ubiquitinated. Ubiquitination by WWP2; promotes localization to extracellular microvesicles. Ubiquitinated by WWP1.

It is found in the cell membrane. Functions as an adapter recruiting ubiquitin-protein ligases to their specific substrates. Through an ubiquitination-dependent mechanism plays for instance a role in the incorporation of SLC11A2 into extracellular vesicles. More generally, plays a role in the extracellular transport of proteins between cells through the release in the extracellular space of microvesicles. By participating to the ITCH-mediated ubiquitination and subsequent degradation of NOTCH1, negatively regulates the NOTCH signaling pathway. The sequence is that of Arrestin domain-containing protein 1 from Mus musculus (Mouse).